Reading from the N-terminus, the 165-residue chain is uncharacterized protein (165 aa).

Residues 7–29 (YPLIFTAFLLIAFCLIFFSYHLI) traverse the membrane as a helical segment.

It localises to the membrane. This is an uncharacterized protein from Bacillus subtilis (strain 168).